The sequence spans 1619 residues: Rap-GAP domain-containing protein DDB_G0281809 (1619 aa).

4 disordered regions span residues 128-249 (SMSN…TTPI), 289-316 (QQQQQQSPSITTGTVKGSKYRESVMPGS), 907-974 (SIGG…PYIN), and 1134-1153 (ISNNNTTTTSNNSIKSTSNN). Composition is skewed to low complexity over residues 130-204 (SNNN…SLSL) and 231-249 (QISATTTAATSPTTPTTPI). A coiled-coil region spans residues 265–295 (FNEVVQQQQQQQQQQQQQQQQQQQQQQQQQS). Low complexity-rich tracts occupy residues 916–926 (SGNSSQPSSTG) and 934–965 (SGSKSNSSSSSSSQPSSTGGSGNNSNSANGGS). The 222-residue stretch at 1273 to 1494 (LNMLDSVSER…TNRKKLISDI (222 aa)) folds into the Rap-GAP domain. Positions 1554 to 1619 (IGTFTLPPPP…LSQSEDQSHK (66 aa)) are disordered. The segment covering 1559–1573 (LPPPPISPTISPQPS) has biased composition (pro residues). Over residues 1574–1590 (PHLSSSGGSWASSKGGS) the composition is skewed to low complexity. The segment covering 1591–1619 (TQPTTPSGRTSNFLSRRPNLSQSEDQSHK) has biased composition (polar residues).

The polypeptide is Rap-GAP domain-containing protein DDB_G0281809 (Dictyostelium discoideum (Social amoeba)).